We begin with the raw amino-acid sequence, 500 residues long: Glycerol kinase (500 aa).

Threonine 13 is a binding site for ADP. ATP is bound by residues threonine 13, threonine 14, and serine 15. Threonine 13 lines the sn-glycerol 3-phosphate pocket. Arginine 17 is an ADP binding site. The sn-glycerol 3-phosphate site is built by arginine 83, glutamate 84, tyrosine 135, and aspartate 245. Residues arginine 83, glutamate 84, tyrosine 135, aspartate 245, and glutamine 246 each coordinate glycerol. Positions 267 and 310 each coordinate ADP. 4 residues coordinate ATP: threonine 267, glycine 310, glutamine 314, and glycine 411. Residues glycine 411 and asparagine 415 each coordinate ADP.

Belongs to the FGGY kinase family. As to quaternary structure, homotetramer and homodimer (in equilibrium).

The enzyme catalyses glycerol + ATP = sn-glycerol 3-phosphate + ADP + H(+). It participates in polyol metabolism; glycerol degradation via glycerol kinase pathway; sn-glycerol 3-phosphate from glycerol: step 1/1. Activated by phosphorylation and inhibited by fructose 1,6-bisphosphate (FBP). Key enzyme in the regulation of glycerol uptake and metabolism. Catalyzes the phosphorylation of glycerol to yield sn-glycerol 3-phosphate. This chain is Glycerol kinase, found in Lactobacillus acidophilus (strain ATCC 700396 / NCK56 / N2 / NCFM).